A 366-amino-acid polypeptide reads, in one-letter code: NADP-dependent isopropanol dehydrogenase (366 aa).

Residues Cys-43, His-65, Glu-66, and Asp-156 each coordinate Zn(2+). NADP(+) contacts are provided by residues 181–184 (IGPV), 204–206 (GSR), Tyr-224, 271–273 (VNY), and Lys-346.

It belongs to the zinc-containing alcohol dehydrogenase family. As to quaternary structure, homodimer. Zn(2+) is required as a cofactor.

Its subcellular location is the cytoplasm. The enzyme catalyses propan-2-ol + NADP(+) = acetone + NADPH + H(+). Its function is as follows. Alcohol dehydrogenase with a preference for medium chain secondary alcohols, such as 2-butanol and isopropanol. Has very low activity with primary alcohols, such as ethanol. Under physiological conditions, the enzyme reduces aldehydes and 2-ketones to produce secondary alcohols. Is also active with acetaldehyde and propionaldehyde. The sequence is that of NADP-dependent isopropanol dehydrogenase from Entamoeba histolytica (strain ATCC 30459 / HM-1:IMSS / ABRM).